A 285-amino-acid chain; its full sequence is MKYIGAHVSAAGGLANAPARAAEIGATAFALFTKNQRQWRAAPLTPQVIDDFKIACEKYHFSAAQILPHDSYLINLGHPVSEALEKSRDAFLDEMQRCEQLGLTLLNFHPGSHLMQIAQEDCLARIAESINIALAQTEGVTAVIENTAGQGSNLGFEFEQLAAIIDGVEDKSRVGVCIDTCHAFAAGYDLRTPEACEKTFAEFGKIVGFQYLRGMHLNDAKSAFGSRVDRHHSLGEGNIGHDAFRWIMQDGRFDGIPLILETINPDIWAEEIAWLKAQQIAEAMA.

9 residues coordinate Zn(2+): H69, H109, E145, D179, H182, H216, D229, H231, and E261.

Belongs to the AP endonuclease 2 family. The cofactor is Zn(2+).

It catalyses the reaction Endonucleolytic cleavage to 5'-phosphooligonucleotide end-products.. Endonuclease IV plays a role in DNA repair. It cleaves phosphodiester bonds at apurinic or apyrimidinic (AP) sites, generating a 3'-hydroxyl group and a 5'-terminal sugar phosphate. The sequence is that of Probable endonuclease 4 from Salmonella typhimurium (strain LT2 / SGSC1412 / ATCC 700720).